Consider the following 373-residue polypeptide: P2Y purinoceptor 1 (373 aa).

Residues 1–51 (MTEVPWSAVPNGTDAAFLAGLGSLWGNSTIASTAAVSSSFRCALIKTGFQF) are Extracellular-facing. Asn-11 and Asn-27 each carry an N-linked (GlcNAc...) asparagine glycan. Disulfide bonds link Cys-42/Cys-296 and Cys-124/Cys-202. Lys-46 is a binding site for ADP. A helical membrane pass occupies residues 52-74 (YYLPAVYILVFIIGFLGNSVAIW). Residues 75–87 (MFVFHMKPWSGIS) are Cytoplasmic-facing. A helical transmembrane segment spans residues 88-109 (VYMFNLALADFLYVLTLPALIF). Residues 110 to 125 (YYFNKTDWIFGDVMCK) are Extracellular-facing. An N-linked (GlcNAc...) asparagine glycan is attached at Asn-113. The helical transmembrane segment at 126–147 (LQRFIFHVNLYGSILFLTCISA) threads the bilayer. The Cytoplasmic segment spans residues 148–166 (HRYSGVVYPLKSLGRLKKK). Residues 167 to 188 (NAIYVSVLVWLIVVVAISPILF) form a helical membrane-spanning segment. Topologically, residues 189–214 (YSGTGIRKNKTVTCYDSTSDEYLRSY) are extracellular. N-linked (GlcNAc...) asparagine glycosylation occurs at Asn-197. ADP is bound at residue 203 to 205 (YDS). A helical transmembrane segment spans residues 215-237 (FIYSMCTTVAMFCIPLVLILGCY). At 238 to 260 (GLIVRALIYKDLDNSPLRRKSIY) the chain is on the cytoplasmic side. The helical transmembrane segment at 261–284 (LVIIVLTVFAVSYIPFHVMKTMNL) threads the bilayer. Residues 283–287 (NLRAR), 303–306 (YATY), and Arg-310 contribute to the ADP site. The Extracellular segment spans residues 285 to 303 (RARLDFQTPEMCDFNDRVY). Residues 304-325 (ATYQVTRGLASLNSCVDPILYF) traverse the membrane as a helical segment. The Cytoplasmic portion of the chain corresponds to 326–373 (LAGDTFRRRLSRATRKASRRSEANLQSKSEEMTLNILSEFKQNGDTSL).

It belongs to the G-protein coupled receptor 1 family. As to expression, expressed in muscle, heart, liver, kidney, lung, brain, spleen, but not in testis.

The protein resides in the cell membrane. Functionally, receptor for extracellular adenine nucleotides such as ADP. In platelets, binding to ADP leads to mobilization of intracellular calcium ions via activation of phospholipase C, a change in platelet shape, and ultimately platelet aggregation. The protein is P2Y purinoceptor 1 (P2ry1) of Rattus norvegicus (Rat).